The sequence spans 233 residues: Favin (233 aa).

Residues E120 and D122 each coordinate Mn(2+). Positions 122, 124, 126, and 130 each coordinate Ca(2+). D130 and H137 together coordinate Mn(2+). An N-linked (GlcNAc...) asparagine glycan is attached at N168.

This sequence belongs to the leguminous lectin family. Heterodimer of an alpha and a beta chain.

This Vicia faba (Broad bean) protein is Favin.